The chain runs to 408 residues: DNA primase DnaG (408 aa).

The Toprim domain occupies 165-243; that stretch reads PELIIVEGRA…KIDYVARAPT (79 aa). Residues Glu-171, Asp-216, and Asp-218 each contribute to the Mg(2+) site.

The protein belongs to the archaeal DnaG primase family. As to quaternary structure, forms a ternary complex with MCM helicase and DNA. Component of the archaeal exosome complex. Mg(2+) serves as cofactor.

The enzyme catalyses ssDNA + n NTP = ssDNA/pppN(pN)n-1 hybrid + (n-1) diphosphate.. Its function is as follows. RNA polymerase that catalyzes the synthesis of short RNA molecules used as primers for DNA polymerase during DNA replication. Also part of the exosome, which is a complex involved in RNA degradation. Acts as a poly(A)-binding protein that enhances the interaction between heteromeric, adenine-rich transcripts and the exosome. The protein is DNA primase DnaG of Sulfurisphaera tokodaii (strain DSM 16993 / JCM 10545 / NBRC 100140 / 7) (Sulfolobus tokodaii).